We begin with the raw amino-acid sequence, 151 residues long: Deoxyuridine 5'-triphosphate nucleotidohydrolase (151 aa).

Residues 70-72, Asn83, 87-89, and Met97 each bind substrate; these read RSG and LID.

This sequence belongs to the dUTPase family. It depends on Mg(2+) as a cofactor.

It carries out the reaction dUTP + H2O = dUMP + diphosphate + H(+). Its pathway is pyrimidine metabolism; dUMP biosynthesis; dUMP from dCTP (dUTP route): step 2/2. In terms of biological role, this enzyme is involved in nucleotide metabolism: it produces dUMP, the immediate precursor of thymidine nucleotides and it decreases the intracellular concentration of dUTP so that uracil cannot be incorporated into DNA. The polypeptide is Deoxyuridine 5'-triphosphate nucleotidohydrolase (Pseudomonas fluorescens (strain SBW25)).